Reading from the N-terminus, the 273-residue chain is Signal recognition particle subunit SEC65 (273 aa).

The disordered stretch occupies residues 25–71; the sequence is PSLRTPIAPKITPKVVRSQDQENPAFLPGTNNNSNSNNNSSNEKEQL. Positions 55–65 are enriched in low complexity; it reads NNNSNSNNNSS.

As to quaternary structure, fungal signal recognition particle (SRP) complex consists of a 7S RNA molecule (scR1) and at least six protein subunits: SRP72, SRP68, SRP54, SEC65, SRP21 and SRP14.

It is found in the cytoplasm. Functionally, signal-recognition-particle (SRP) assembly has a crucial role in targeting secretory proteins to the rough endoplasmic reticulum (ER) membrane. SRP is required for the cotranslational protein translocation for ER import and preferentially recognizes strongly hydrophobic signal sequences. It is involved in targeting the nascent chain-ribosome (RNC) complex to the ER and is proposed to participate in the arrest of nascent chain elongation during membrane targeting. SEC65 is required for SRP integrity. This is Signal recognition particle subunit SEC65 (SEC65) from Saccharomyces cerevisiae (strain ATCC 204508 / S288c) (Baker's yeast).